Reading from the N-terminus, the 155-residue chain is Probable calcium-binding protein CML44 (155 aa).

EF-hand domains are found at residues 6 to 41 (ITTNDLRRMFKTLDKNQDGLVTLDELLWILDKLGWA), 85 to 120 (DNDEAIARAFNVFDVNGDGYISAEELRDVLERLGFE), and 130 to 155 (RMIRVHDKNLDGFVDFEEFKNMILHV). Residues D19, N21, D23, E30, D98, N100, D102, Y104, and E109 each contribute to the Ca(2+) site.

Functionally, potential calcium sensor. This Arabidopsis thaliana (Mouse-ear cress) protein is Probable calcium-binding protein CML44 (CML44).